The following is a 945-amino-acid chain: Collagen-like protein 1 (945 aa).

Disordered stretches follow at residues 80-226 (SLKG…SPDL) and 257-441 (GEKG…DKGE). 2 Collagen-like domains span residues 83–142 (GDPG…QGDK) and 146–205 (GDVG…KGDK). 2 stretches are compositionally biased toward basic and acidic residues: residues 109 to 145 (QGTK…KGDQ) and 168 to 208 (DQGD…KGDK). An N-linked (GlcNAc...) asparagine; by host glycan is attached at Asn-211. 5 consecutive Collagen-like domains span residues 257–376 (GEKG…KGDK), 383–442 (GDKG…KGEN), 488–547 (GEKG…VGDK), 554–613 (GDKG…KGDV), and 635–694 (GDKG…VGAS). A glycan (N-linked (GlcNAc...) asparagine; by host) is linked at Asn-442. A compositionally biased stretch (basic and acidic residues) spans 488–687 (GEKGDKGDTG…DKGDKGDKGD (200 aa)). Residues 488–712 (GEKGDKGDTG…SPTTGENGDS (225 aa)) are disordered. The segment covering 703–712 (SPTTGENGDS) has biased composition (polar residues). The N-linked (GlcNAc...) asparagine; by host glycan is linked to Asn-716. The tract at residues 733 to 768 (TNIKGDKGDKGDKGDKGDKGDTGDVGLKGDTGTPGS) is disordered. Basic and acidic residues predominate over residues 736–754 (KGDKGDKGDKGDKGDKGDT). A compositionally biased stretch (low complexity) spans 756–765 (DVGLKGDTGT).

May be hydroxylated on lysine by the viral-encoded procollagen-lysine,2-oxoglutarate 5-dioxygenase.

The protein resides in the virion. May participate in the formation of a layer of cross-linked glycosylated fibrils at the viral surface thus giving it a hairy-like appearance. The chain is Collagen-like protein 1 from Acanthamoeba polyphaga mimivirus (APMV).